The chain runs to 212 residues: Imidazole glycerol phosphate synthase subunit HisH (212 aa).

Positions 1–211 (MIGVIDYGMG…KQFTQEQKVK (211 aa)) constitute a Glutamine amidotransferase type-1 domain. Cysteine 79 serves as the catalytic Nucleophile. Catalysis depends on residues histidine 186 and glutamate 188.

In terms of assembly, heterodimer of HisH and HisF.

The protein localises to the cytoplasm. It catalyses the reaction 5-[(5-phospho-1-deoxy-D-ribulos-1-ylimino)methylamino]-1-(5-phospho-beta-D-ribosyl)imidazole-4-carboxamide + L-glutamine = D-erythro-1-(imidazol-4-yl)glycerol 3-phosphate + 5-amino-1-(5-phospho-beta-D-ribosyl)imidazole-4-carboxamide + L-glutamate + H(+). The enzyme catalyses L-glutamine + H2O = L-glutamate + NH4(+). The protein operates within amino-acid biosynthesis; L-histidine biosynthesis; L-histidine from 5-phospho-alpha-D-ribose 1-diphosphate: step 5/9. Functionally, IGPS catalyzes the conversion of PRFAR and glutamine to IGP, AICAR and glutamate. The HisH subunit catalyzes the hydrolysis of glutamine to glutamate and ammonia as part of the synthesis of IGP and AICAR. The resulting ammonia molecule is channeled to the active site of HisF. This chain is Imidazole glycerol phosphate synthase subunit HisH, found in Bacillus licheniformis (strain ATCC 14580 / DSM 13 / JCM 2505 / CCUG 7422 / NBRC 12200 / NCIMB 9375 / NCTC 10341 / NRRL NRS-1264 / Gibson 46).